Reading from the N-terminus, the 221-residue chain is Small ribosomal subunit protein uS3 (221 aa).

Positions 39-108 (IRKFVKKRSY…NVIINIVEVK (70 aa)) constitute a KH type-2 domain.

Belongs to the universal ribosomal protein uS3 family. As to quaternary structure, part of the 30S ribosomal subunit. Forms a tight complex with proteins S10 and S14.

Its function is as follows. Binds the lower part of the 30S subunit head. Binds mRNA in the 70S ribosome, positioning it for translation. This is Small ribosomal subunit protein uS3 from Clostridium novyi (strain NT).